The chain runs to 579 residues: Glucans biosynthesis protein G (579 aa).

Residues 1–37 (MIVSPHKASRIPGNRLRKALMASAALVGLMSAGQLWA) form the signal peptide. The tract at residues 516-579 (AKPAEEAKHD…TWSYQLPADE (64 aa)) is disordered. Residues 517-539 (KPAEEAKHDKTAAKHGKAEKAAK) are compositionally biased toward basic and acidic residues.

This sequence belongs to the OpgD/OpgG family.

Its subcellular location is the periplasm. Its pathway is glycan metabolism; osmoregulated periplasmic glucan (OPG) biosynthesis. Its function is as follows. Involved in the biosynthesis of osmoregulated periplasmic glucans (OPGs). This is Glucans biosynthesis protein G from Pseudomonas putida (strain W619).